Here is a 447-residue protein sequence, read N- to C-terminus: MNAYEANFDGLVGPTHNYGGLAVGNIASAESALTNSNPREAALQGLEKMKRLADLGLMQGVLPPQERPAVSVLRKLGFTGEDATIIRCAAKVAPGLLRACSSASSMWVANAATVSPSADTEDGKVHLTAANLPSQFHRSIEAPVTSAVLKRVFSNERYFVHHDPLPSNLYFGDEGAANHMRLCPRHGEPGVEIFVFGRSASRDIPKPLRFPARQSLEASEAVARLHQIKRGKELFVQQGPAAIDAGAFHNDVLAVANCDVLFYHEAAYRDWEETEARITKACDWPIHFIRTGEEDVTLAEAVRTYLFNAQLLTLPGNEMMILAPSECRDSHSARNFLERVVQDAANPIAHVEYVDLRQSMKNGGGPACLRLRVVLTEPELDAVQENSRVILDECLYNDLKAWIEKHYRECLSPTDLGDPALLQESRAALDELTTILGFGSLYDFQRP.

Residues 19 to 28 (GGLAVGNIAS), Asn110, and 137 to 138 (HR) each bind substrate. Glu174 is a catalytic residue. Position 213 (Arg213) interacts with substrate. His249 is an active-site residue. Asp251 and Asn362 together coordinate substrate. The active-site Nucleophile is Cys368.

It belongs to the succinylarginine dihydrolase family. As to quaternary structure, homodimer.

The catalysed reaction is N(2)-succinyl-L-arginine + 2 H2O + 2 H(+) = N(2)-succinyl-L-ornithine + 2 NH4(+) + CO2. It functions in the pathway amino-acid degradation; L-arginine degradation via AST pathway; L-glutamate and succinate from L-arginine: step 2/5. Catalyzes the hydrolysis of N(2)-succinylarginine into N(2)-succinylornithine, ammonia and CO(2). The polypeptide is N-succinylarginine dihydrolase (Nitrosospira multiformis (strain ATCC 25196 / NCIMB 11849 / C 71)).